The sequence spans 430 residues: MTTQTTPAHIAMFSIAAHGHVNPSLEVIRELVARGHRVTYAIPPVFADKVAATGPRPVLYHSTLPGPDADPEAWGSTLLDNRRTFLNDAIQALPQLADAYADDIPDLVLHDITSYPARVLARRWGVPAVSLSPNLVAWKGYEEEVAEPMWREPRQTERGRAYYARFEAWLKENGITEHPDTFASHPPRSLVLIPKALQPHADRVDEDVYTFVGACQGDRAEEGGWQRPAGAEKVVLVSLGSAFTKQPAFYRECVRAFGNLPGWHLVLQIGRKVTPAELGELPDNVEVHDWVPQLAILRQADLFVTHAGAGGSQEGLATATPMIAVPQAVDQFGNADMLQGLGVARKLATEEATADLLRETALALVDDPEVARRLRRIQAEMAQEGGTRRAADLIEAELPARHERQEPVGDRPNVGDRPAGVRSDRQRSAL.

A disordered region spans residues 385-430 (GGTRRAADLIEAELPARHERQEPVGDRPNVGDRPAGVRSDRQRSAL). The segment covering 386–409 (GTRRAADLIEAELPARHERQEPVG) has biased composition (basic and acidic residues).

Belongs to the UDP-glycosyltransferase family.

Its function is as follows. Specifically inactivates oleandomycin via 2'-O-glycosylation using UDP-glucose. The protein is Oleandomycin glycosyltransferase (oleD) of Streptomyces antibioticus.